The following is a 283-amino-acid chain: Pantothenate synthetase (283 aa).

An ATP-binding site is contributed by 30 to 37 (MGNLHDGH). The active-site Proton donor is the His-37. Gln-61 contacts (R)-pantoate. Position 61 (Gln-61) interacts with beta-alanine. 149 to 152 (GEKD) is a binding site for ATP. Gln-155 is a (R)-pantoate binding site. An ATP-binding site is contributed by 186–189 (LSSR).

Belongs to the pantothenate synthetase family. In terms of assembly, homodimer.

It is found in the cytoplasm. It carries out the reaction (R)-pantoate + beta-alanine + ATP = (R)-pantothenate + AMP + diphosphate + H(+). It participates in cofactor biosynthesis; (R)-pantothenate biosynthesis; (R)-pantothenate from (R)-pantoate and beta-alanine: step 1/1. Its function is as follows. Catalyzes the condensation of pantoate with beta-alanine in an ATP-dependent reaction via a pantoyl-adenylate intermediate. The sequence is that of Pantothenate synthetase from Escherichia coli O17:K52:H18 (strain UMN026 / ExPEC).